Here is a 448-residue protein sequence, read N- to C-terminus: Tubulin beta chain (448 aa).

8 residues coordinate GTP: glutamine 11, glutamate 69, serine 138, glycine 142, threonine 143, glycine 144, asparagine 204, and asparagine 226. Glutamate 69 lines the Mg(2+) pocket. A disordered region spans residues 425–448 (YQDASISEGEEEYLEEEEPLEHEE). Over residues 432 to 448 (EGEEEYLEEEEPLEHEE) the composition is skewed to acidic residues.

The protein belongs to the tubulin family. Dimer of alpha and beta chains. A typical microtubule is a hollow water-filled tube with an outer diameter of 25 nm and an inner diameter of 15 nM. Alpha-beta heterodimers associate head-to-tail to form protofilaments running lengthwise along the microtubule wall with the beta-tubulin subunit facing the microtubule plus end conferring a structural polarity. Microtubules usually have 13 protofilaments but different protofilament numbers can be found in some organisms and specialized cells. The cofactor is Mg(2+).

The protein resides in the cytoplasm. Its subcellular location is the cytoskeleton. Its function is as follows. Tubulin is the major constituent of microtubules, a cylinder consisting of laterally associated linear protofilaments composed of alpha- and beta-tubulin heterodimers. Microtubules grow by the addition of GTP-tubulin dimers to the microtubule end, where a stabilizing cap forms. Below the cap, tubulin dimers are in GDP-bound state, owing to GTPase activity of alpha-tubulin. The sequence is that of Tubulin beta chain (benR) from Aspergillus parasiticus.